The sequence spans 80 residues: Biotin synthase auxiliary protein (80 aa).

It belongs to the BsaP family. The cofactor is iron-sulfur cluster.

Its function is as follows. Required for the activity of the biotin synthase BioB. The polypeptide is Biotin synthase auxiliary protein (Mycobacterium leprae (strain TN)).